We begin with the raw amino-acid sequence, 87 residues long: Small ribosomal subunit protein uS19 (87 aa).

The tract at residues 1 to 29 (MARSLKKGPFVDHHLQKKVDVQNKEGTKK) is disordered. A compositionally biased stretch (basic and acidic residues) spans 9–28 (PFVDHHLQKKVDVQNKEGTK).

Belongs to the universal ribosomal protein uS19 family.

Its function is as follows. Protein S19 forms a complex with S13 that binds strongly to the 16S ribosomal RNA. The chain is Small ribosomal subunit protein uS19 from Protochlamydia amoebophila (strain UWE25).